The primary structure comprises 333 residues: PDZ domain-containing protein GIPC1 (333 aa).

A compositionally biased stretch (basic residues) spans 1 to 11 (MPLGLGRRKKA). The disordered stretch occupies residues 1–53 (MPLGLGRRKKAPPLVENEEAEPSRSGLGVGEPGPLGGSAAGESQMGLPPPPAA). The segment covering 27 to 39 (LGVGEPGPLGGSA) has biased composition (gly residues). Phosphoserine is present on Ser-68. The PDZ domain occupies 133-213 (EVEVFKSEEA…GRTFTLKLTE (81 aa)). Phosphoserine occurs at positions 222, 225, and 232. Positions 223-244 (QRSAGGHPGSGPQLGTGRGTLR) are disordered. A compositionally biased stretch (gly residues) spans 228–240 (GHPGSGPQLGTGR). Thr-242 carries the phosphothreonine modification. Ser-247 is modified (phosphoserine).

This sequence belongs to the GIPC family. Interacts with GLUT1 (C-terminus), ACTN1, KIF1B, MYO6 and PLEKHG5. Interacts with RGS19 C-terminus. Interacts with SDC4/syndecan-4 and SEMA4C/semaphorin-4C. As to expression, widely expressed.

The protein localises to the cytoplasm. The protein resides in the membrane. Its function is as follows. Inhibits endothelial cell migration (in vitro). May be involved in G protein-linked signaling. This is PDZ domain-containing protein GIPC1 (Gipc1) from Mus musculus (Mouse).